Reading from the N-terminus, the 98-residue chain is NADH-ubiquinone oxidoreductase chain 4L (98 aa).

3 helical membrane-spanning segments follow: residues 1–21, 29–49, and 61–81; these read MSLV…GLLM, SLLC…LIIL, and IILL…LVMV.

The protein belongs to the complex I subunit 4L family. In terms of assembly, core subunit of respiratory chain NADH dehydrogenase (Complex I) which is composed of 45 different subunits.

It localises to the mitochondrion inner membrane. The catalysed reaction is a ubiquinone + NADH + 5 H(+)(in) = a ubiquinol + NAD(+) + 4 H(+)(out). In terms of biological role, core subunit of the mitochondrial membrane respiratory chain NADH dehydrogenase (Complex I) which catalyzes electron transfer from NADH through the respiratory chain, using ubiquinone as an electron acceptor. Part of the enzyme membrane arm which is embedded in the lipid bilayer and involved in proton translocation. This is NADH-ubiquinone oxidoreductase chain 4L (MT-ND4L) from Hippopotamus amphibius (Hippopotamus).